Consider the following 264-residue polypeptide: Splicing factor U2af 38 kDa subunit (264 aa).

Residues 12-40 (EKDKVNCSFYFKIGACRHGDRCSRIHNKP) form a C3H1-type 1 zinc finger. A Phosphoserine modification is found at Ser-19. Positions 44–149 (QTVLLQNLYV…RPVYSELSPV (106 aa)) constitute an RRM domain. The segment at 151–178 (DFREACCRQYEMGECTRSGFCNFMHLKP) adopts a C3H1-type 2 zinc-finger fold. The segment covering 190 to 219 (RRRRARSRSRSPGRRRGSRSRSRSPGRRGG) has biased composition (basic residues). The tract at residues 190 to 264 (RRRRARSRSR…GGGGGGGGRY (75 aa)) is disordered. The segment covering 233–251 (NERDNMRGNDRGNDRDRRK) has biased composition (basic and acidic residues). A compositionally biased stretch (gly residues) spans 253 to 264 (GGGGGGGGGGRY).

Belongs to the splicing factor SR family. As to quaternary structure, associates with a 65 kDa protein.

The protein resides in the nucleus. Functionally, necessary for the splicing of pre-mRNA. Binds to the polypyrimidine tract of introns early during spliceosome assembly. The protein is Splicing factor U2af 38 kDa subunit (U2af38) of Drosophila melanogaster (Fruit fly).